A 469-amino-acid chain; its full sequence is Serine hydroxymethyltransferase, cytosolic (469 aa).

T20 is modified (phosphothreonine). S26 is subject to Phosphoserine. An N6-(pyridoxal phosphate)lysine modification is found at K248. S429 is modified (phosphoserine). Residue K456 forms a Glycyl lysine isopeptide (Lys-Gly) (interchain with G-Cter in ubiquitin) linkage.

It belongs to the SHMT family. In terms of assembly, homotetramer. It depends on pyridoxal 5'-phosphate as a cofactor.

It localises to the cytoplasm. The enzyme catalyses (6R)-5,10-methylene-5,6,7,8-tetrahydrofolate + glycine + H2O = (6S)-5,6,7,8-tetrahydrofolate + L-serine. Its pathway is one-carbon metabolism; tetrahydrofolate interconversion. Interconversion of serine and glycine. In Saccharomyces cerevisiae (strain ATCC 204508 / S288c) (Baker's yeast), this protein is Serine hydroxymethyltransferase, cytosolic.